A 109-amino-acid chain; its full sequence is Transcription initiation factor IIA subunit 2 (109 aa).

This sequence belongs to the TFIIA subunit 2 family. In terms of assembly, TFIIA is a heterodimer composed of the large toa1 and the small toa2 subunits.

The protein resides in the nucleus. Its subcellular location is the cytoplasm. TFIIA is a component of the transcription machinery of RNA polymerase II and plays an important role in transcriptional activation. TFIIA in a complex with tbp mediates transcriptional activity. This Schizosaccharomyces pombe (strain 972 / ATCC 24843) (Fission yeast) protein is Transcription initiation factor IIA subunit 2 (toa2).